The primary structure comprises 255 residues: Expansin-A25 (255 aa).

An N-terminal signal peptide occupies residues 1–26; sequence MEYAILFATSLVITVLAASGFAPAHG. Residues 45–160 form the Expansin-like EG45 domain; the sequence is GGACGYGNLY…QQVKCWRQGG (116 aa). Residues 170-249 enclose the Expansin-like CBD domain; sequence FFELVLVSNV…WWSFGMTFTS (80 aa).

The protein belongs to the expansin family. Expansin A subfamily. In terms of tissue distribution, expressed in panicles and flowers.

It localises to the secreted. The protein resides in the cell wall. The protein localises to the membrane. Functionally, may cause loosening and extension of plant cell walls by disrupting non-covalent bonding between cellulose microfibrils and matrix glucans. No enzymatic activity has been found. May be required for rapid internodal elongation in deepwater rice during submergence. This chain is Expansin-A25 (EXPA25), found in Oryza sativa subsp. japonica (Rice).